The primary structure comprises 367 residues: Peptide chain release factor 2 (367 aa).

Glutamine 254 bears the N5-methylglutamine mark.

It belongs to the prokaryotic/mitochondrial release factor family. Post-translationally, methylated by PrmC. Methylation increases the termination efficiency of RF2.

It localises to the cytoplasm. In terms of biological role, peptide chain release factor 2 directs the termination of translation in response to the peptide chain termination codons UGA and UAA. The polypeptide is Peptide chain release factor 2 (Neisseria gonorrhoeae (strain ATCC 700825 / FA 1090)).